The chain runs to 115 residues: Ribonuclease P protein component (115 aa).

Belongs to the RnpA family. As to quaternary structure, consists of a catalytic RNA component (M1 or rnpB) and a protein subunit.

It catalyses the reaction Endonucleolytic cleavage of RNA, removing 5'-extranucleotides from tRNA precursor.. RNaseP catalyzes the removal of the 5'-leader sequence from pre-tRNA to produce the mature 5'-terminus. It can also cleave other RNA substrates such as 4.5S RNA. The protein component plays an auxiliary but essential role in vivo by binding to the 5'-leader sequence and broadening the substrate specificity of the ribozyme. In Bacillus cereus (strain ATCC 10987 / NRS 248), this protein is Ribonuclease P protein component.